The following is a 675-amino-acid chain: UvrABC system protein B (675 aa).

The Helicase ATP-binding domain maps to 32–417; sequence EGLSDGLAYQ…EHAGQVVEQV (386 aa). Residue 45-52 participates in ATP binding; that stretch reads GVTGSGKT. The Beta-hairpin motif lies at 98–121; it reads YYDYYQPEAYVPSRDLFIEKDSAI. Positions 436–602 constitute a Helicase C-terminal domain; that stretch reads QVDDLMSEIN…QIKKQVKDII (167 aa). Residues 634–669 enclose the UVR domain; that stretch reads IKEIAKLEKAMQQAARDLQFEEAAVLRDRIRNIKEN.

The protein belongs to the UvrB family. As to quaternary structure, forms a heterotetramer with UvrA during the search for lesions. Interacts with UvrC in an incision complex.

The protein resides in the cytoplasm. The UvrABC repair system catalyzes the recognition and processing of DNA lesions. A damage recognition complex composed of 2 UvrA and 2 UvrB subunits scans DNA for abnormalities. Upon binding of the UvrA(2)B(2) complex to a putative damaged site, the DNA wraps around one UvrB monomer. DNA wrap is dependent on ATP binding by UvrB and probably causes local melting of the DNA helix, facilitating insertion of UvrB beta-hairpin between the DNA strands. Then UvrB probes one DNA strand for the presence of a lesion. If a lesion is found the UvrA subunits dissociate and the UvrB-DNA preincision complex is formed. This complex is subsequently bound by UvrC and the second UvrB is released. If no lesion is found, the DNA wraps around the other UvrB subunit that will check the other stand for damage. This Neisseria gonorrhoeae protein is UvrABC system protein B.